We begin with the raw amino-acid sequence, 407 residues long: 1-deoxy-D-xylulose 5-phosphate reductoisomerase (407 aa).

7 residues coordinate NADPH: Thr22, Gly23, Ser24, Ile25, Gly48, Asn51, and Asn128. Lys129 contacts 1-deoxy-D-xylulose 5-phosphate. Glu130 is an NADPH binding site. Position 152 (Asp152) interacts with Mn(2+). 4 residues coordinate 1-deoxy-D-xylulose 5-phosphate: Ser153, Glu154, Ser178, and His201. Position 154 (Glu154) interacts with Mn(2+). Gly207 contributes to the NADPH binding site. 1-deoxy-D-xylulose 5-phosphate is bound by residues Ser214, Asn219, Lys220, and Glu223. Glu223 serves as a coordination point for Mn(2+).

Belongs to the DXR family. Mg(2+) is required as a cofactor. It depends on Mn(2+) as a cofactor.

The catalysed reaction is 2-C-methyl-D-erythritol 4-phosphate + NADP(+) = 1-deoxy-D-xylulose 5-phosphate + NADPH + H(+). Its pathway is isoprenoid biosynthesis; isopentenyl diphosphate biosynthesis via DXP pathway; isopentenyl diphosphate from 1-deoxy-D-xylulose 5-phosphate: step 1/6. Functionally, catalyzes the NADPH-dependent rearrangement and reduction of 1-deoxy-D-xylulose-5-phosphate (DXP) to 2-C-methyl-D-erythritol 4-phosphate (MEP). In Mycobacterium avium (strain 104), this protein is 1-deoxy-D-xylulose 5-phosphate reductoisomerase.